Reading from the N-terminus, the 546-residue chain is Chaperonin GroEL (546 aa).

ATP is bound by residues Thr29–Pro32, Lys50, Asp86–Thr90, Gly415, and Asp495.

It belongs to the chaperonin (HSP60) family. In terms of assembly, forms a cylinder of 14 subunits composed of two heptameric rings stacked back-to-back. Interacts with the co-chaperonin GroES.

Its subcellular location is the cytoplasm. The catalysed reaction is ATP + H2O + a folded polypeptide = ADP + phosphate + an unfolded polypeptide.. In terms of biological role, together with its co-chaperonin GroES, plays an essential role in assisting protein folding. The GroEL-GroES system forms a nano-cage that allows encapsulation of the non-native substrate proteins and provides a physical environment optimized to promote and accelerate protein folding. The chain is Chaperonin GroEL from Parabacteroides distasonis (strain ATCC 8503 / DSM 20701 / CIP 104284 / JCM 5825 / NCTC 11152).